Here is a 270-residue protein sequence, read N- to C-terminus: Acyl-[acyl-carrier-protein]--UDP-N-acetylglucosamine O-acyltransferase (270 aa).

The protein belongs to the transferase hexapeptide repeat family. LpxA subfamily. As to quaternary structure, homotrimer.

It localises to the cytoplasm. It catalyses the reaction a (3R)-hydroxyacyl-[ACP] + UDP-N-acetyl-alpha-D-glucosamine = a UDP-3-O-[(3R)-3-hydroxyacyl]-N-acetyl-alpha-D-glucosamine + holo-[ACP]. It functions in the pathway glycolipid biosynthesis; lipid IV(A) biosynthesis; lipid IV(A) from (3R)-3-hydroxytetradecanoyl-[acyl-carrier-protein] and UDP-N-acetyl-alpha-D-glucosamine: step 1/6. In terms of biological role, involved in the biosynthesis of lipid A, a phosphorylated glycolipid that anchors the lipopolysaccharide to the outer membrane of the cell. The polypeptide is Acyl-[acyl-carrier-protein]--UDP-N-acetylglucosamine O-acyltransferase (Bartonella tribocorum (strain CIP 105476 / IBS 506)).